The sequence spans 480 residues: Nuclear receptor subfamily 6 group A member 1 (480 aa).

The disordered stretch occupies residues 1 to 32 (MERDEPPPSGGGGGGGSAGFLEPPAALPPPPR). Positions 57–132 (QRTCLICGDR…MGMNRKAIRE (76 aa)) form a DNA-binding region, nuclear receptor. 8 residues coordinate Zn(2+): Cys-60, Cys-63, Cys-77, Cys-80, Cys-96, Cys-102, Cys-112, and Cys-115. 2 NR C4-type zinc fingers span residues 60–80 (CLIC…CEGC) and 96–120 (CSRD…LLKC). Disordered regions lie at residues 131 to 150 (REDG…QISE) and 162 to 199 (FEEE…LSSS). The span at 165-177 (EANHWSNHGDSDH) shows a compositional bias: basic and acidic residues. Positions 172 to 253 (HGDSDHSSPG…RSLDPQSYSL (82 aa)) are sufficient for interaction with UIMC1. The span at 187–199 (SNQPSPGSTLSSS) shows a compositional bias: low complexity. In terms of domain architecture, NR LBD spans 249–480 (QSYSLIHQLL…HSCKTSVGKE (232 aa)).

This sequence belongs to the nuclear hormone receptor family. NR6 subfamily. As to quaternary structure, homodimer. Interacts with UIMC1. As to expression, shows highest expression in the germ cells of the adult testis.

The protein resides in the nucleus. In terms of biological role, orphan nuclear receptor that binds to a response element containing the sequence 5'-TCAAGGTCA-3'. Acts as a regulator of embryonic stem cell pluripotency by mediating repression of POU5F1/OCT4: binds to the DR0 element within the POU5F1/OCT4 promoter and inhibits POU5F1/OCT4 expression during embryonic stem cell differentiation. Involved in the regulation of gene expression in germ cell development during gametogenesis. The sequence is that of Nuclear receptor subfamily 6 group A member 1 (NR6A1) from Homo sapiens (Human).